Reading from the N-terminus, the 255-residue chain is MSSNKASFFTRLRRLCRLAVWLFKTGKNLRGIDGGCPESRNRAVIELGRGVLAALDIGLEVGRPAPEHPNGVLVAANHVSWLDIFAMSAVYPSSFIAKQEIKSWPVLGKMGQNAGTVFINRNSRRDIEPINRAVCETLQRGQNVSFFPEARTSSGLGLLPFKAALFQSAIDAGAKVLAVALRYYDETGKRTARPSYADVGLPTCLWRIVSMKKLTIRVDFVCVADAAESEDRYALKDKIEESIRAVVADDADIAV.

The short motif at 78–83 (HVSWLD) is the HXXXXD motif element.

The protein belongs to the 1-acyl-sn-glycerol-3-phosphate acyltransferase family.

It is found in the cell inner membrane. It catalyses the reaction a 1-acyl-sn-glycero-3-phosphate + an acyl-CoA = a 1,2-diacyl-sn-glycero-3-phosphate + CoA. It participates in phospholipid metabolism; CDP-diacylglycerol biosynthesis; CDP-diacylglycerol from sn-glycerol 3-phosphate: step 2/3. Converts lysophosphatidic acid (LPA) into phosphatidic acid by incorporating acyl moiety at the 2 position. This is 1-acyl-sn-glycerol-3-phosphate acyltransferase (plsC) from Neisseria meningitidis serogroup B (strain ATCC BAA-335 / MC58).